The primary structure comprises 457 residues: Reticulon-like protein B18 (457 aa).

The interval 94–183 (AAVTARRSKT…SPSSDQPQDV (90 aa)) is disordered. Residues 124 to 136 (LRSEAMVDTKENT) are compositionally biased toward basic and acidic residues. Basic residues predominate over residues 149 to 163 (NQRKQKKLGRSKKEK). The segment covering 166–183 (SVPLLASPSPSSDQPQDV) has biased composition (low complexity). Residues 195-385 (ISDLIMWRDV…AFWNLTSLKT (191 aa)) enclose the Reticulon domain. Helical transmembrane passes span 208-228 (TLWF…AKGF), 230-250 (FSVF…SFLS), 314-334 (YGYL…SFTI), and 377-397 (FWNL…VVVI). Residues 407 to 457 (DSEDEEEKKQQEKTHPEQQKSPEDKSTSPRSAEEEQALVLVAETKAPKKLY) are disordered. Basic and acidic residues predominate over residues 413-439 (EKKQQEKTHPEQQKSPEDKSTSPRSAE).

Its subcellular location is the endoplasmic reticulum membrane. This Arabidopsis thaliana (Mouse-ear cress) protein is Reticulon-like protein B18 (RTNLB18).